A 147-amino-acid chain; its full sequence is Hemoglobin subunit gamma (147 aa).

The Globin domain occupies 3–147; sequence HFTAEEKAAI…VANALAYKYH (145 aa). Heme b contacts are provided by His-64 and His-93.

The protein belongs to the globin family. As to quaternary structure, heterotetramer of two alpha chains and two gamma chains in fetal hemoglobin (Hb F). As to expression, red blood cells.

In terms of biological role, gamma chains make up the fetal hemoglobin F, in combination with alpha chains. The sequence is that of Hemoglobin subunit gamma (HBG) from Loxodonta africana (African elephant).